The sequence spans 51 residues: Light-harvesting protein B-800/850 beta chain (51 aa).

The Cytoplasmic portion of the chain corresponds to 2–23 (ADDANKVWPSGLTTAEAEELQK). Residues 24–46 (GLVDGTRVFGVIAVLAHILAYAY) traverse the membrane as a helical segment. H40 serves as a coordination point for a bacteriochlorophyll. The Periplasmic segment spans residues 47-51 (TPWLH).

It belongs to the antenna complex beta subunit family. In terms of assembly, an alpha/beta heterodimer conjugated to 3 bacteriochlorophyll molecules. The core complex is formed by different alpha and beta chains, binding bacteriochlorophyll molecules, and arranged most probably in tetrameric structures disposed around the reaction center. The non-pigmented gamma chains may constitute additional components.

The protein resides in the cell inner membrane. In terms of biological role, antenna complexes are light-harvesting systems, which transfer the excitation energy to the reaction centers. This chain is Light-harvesting protein B-800/850 beta chain (pucB), found in Rubrivivax gelatinosus (Rhodocyclus gelatinosus).